The chain runs to 235 residues: Small ribosomal subunit protein uS2c (235 aa).

It belongs to the universal ribosomal protein uS2 family.

The protein resides in the plastid. It localises to the chloroplast. In Huperzia lucidula (Shining clubmoss), this protein is Small ribosomal subunit protein uS2c (rps2).